A 274-amino-acid polypeptide reads, in one-letter code: Endonuclease 8-like L720 (274 aa).

An FPG-type; degenerate zinc finger spans residues Arg-241–Leu-274.

Belongs to the FPG family.

This is Endonuclease 8-like L720 from Acanthamoeba polyphaga mimivirus (APMV).